We begin with the raw amino-acid sequence, 244 residues long: Uridylate kinase (244 aa).

Lys-15–Gly-18 is an ATP binding site. The tract at residues Gly-23–Gly-28 is involved in allosteric activation by GTP. Gly-57 contacts UMP. ATP-binding residues include Gly-58 and Arg-62. Residues Asp-77 and Thr-138–Thr-145 each bind UMP. The ATP site is built by Thr-165, Phe-171, and Asp-174.

The protein belongs to the UMP kinase family. Homohexamer.

Its subcellular location is the cytoplasm. The catalysed reaction is UMP + ATP = UDP + ADP. Its pathway is pyrimidine metabolism; CTP biosynthesis via de novo pathway; UDP from UMP (UMPK route): step 1/1. Its activity is regulated as follows. Allosterically activated by GTP. Inhibited by UTP. Its function is as follows. Catalyzes the reversible phosphorylation of UMP to UDP. This chain is Uridylate kinase, found in Aeromonas salmonicida (strain A449).